A 102-amino-acid chain; its full sequence is Large ribosomal subunit protein uL24 (102 aa).

Belongs to the universal ribosomal protein uL24 family. Part of the 50S ribosomal subunit.

In terms of biological role, one of two assembly initiator proteins, it binds directly to the 5'-end of the 23S rRNA, where it nucleates assembly of the 50S subunit. One of the proteins that surrounds the polypeptide exit tunnel on the outside of the subunit. This Rhizobium leguminosarum bv. trifolii (strain WSM2304) protein is Large ribosomal subunit protein uL24.